We begin with the raw amino-acid sequence, 76 residues long: Small ribosomal subunit protein bS18 (76 aa).

This sequence belongs to the bacterial ribosomal protein bS18 family. As to quaternary structure, part of the 30S ribosomal subunit. Forms a tight heterodimer with protein bS6.

Binds as a heterodimer with protein bS6 to the central domain of the 16S rRNA, where it helps stabilize the platform of the 30S subunit. The polypeptide is Small ribosomal subunit protein bS18 (Aeromonas salmonicida (strain A449)).